A 149-amino-acid polypeptide reads, in one-letter code: Large ribosomal subunit protein bL9 (149 aa).

The protein belongs to the bacterial ribosomal protein bL9 family.

Functionally, binds to the 23S rRNA. The sequence is that of Large ribosomal subunit protein bL9 from Thiobacillus denitrificans (strain ATCC 25259 / T1).